The sequence spans 385 residues: Putative glutamate--cysteine ligase 2 (385 aa).

This sequence belongs to the glutamate--cysteine ligase type 2 family. YbdK subfamily.

It carries out the reaction L-cysteine + L-glutamate + ATP = gamma-L-glutamyl-L-cysteine + ADP + phosphate + H(+). Functionally, ATP-dependent carboxylate-amine ligase which exhibits weak glutamate--cysteine ligase activity. The polypeptide is Putative glutamate--cysteine ligase 2 (Solibacter usitatus (strain Ellin6076)).